Consider the following 587-residue polypeptide: Probable intramembrane protease YKL100C (587 aa).

The Lumenal portion of the chain corresponds to 1 to 85 (MDKYLNSFVD…HSLVFNYATL (85 aa)). A helical transmembrane segment spans residues 86–106 (VLIASALVVIGSFTSISSIPF). At 107 to 156 (TALPPTREHSLFDPTDFDVDHDCHVIYRENDEDKKKKKKSKRFFDMMDEK) the chain is on the cytoplasmic side. Residues 157–177 (HAIILPLTSGCTLLALYFVIK) form a helical membrane-spanning segment. Topologically, residues 178-192 (KLHLNWLKYVVKILN) are lumenal. Residues 193-213 (FNITLLNIPAGTFVYSYFLNS) traverse the membrane as a helical segment. Over 214–303 (LFRNLSHLAS…KSKRQISNMY (90 aa)) the chain is Cytoplasmic. A helical membrane pass occupies residues 304 to 324 (LNSALIVSFVLSIVSTVYFYL). At 325-328 (SPND) the chain is on the lumenal side. The helical transmembrane segment at 329–349 (WLISNAVSMNMAIWSIAQLKL) threads the bilayer. Residues 350 to 351 (KN) are Cytoplasmic-facing. Residues 352 to 372 (LKSGALILIALFFYDICFVFG) traverse the membrane as a helical segment. Aspartate 366 is an active-site residue. Residues 373-401 (TDVMVTVATNLDIPVKLSLPVKFNTAQNN) lie on the Lumenal side of the membrane. The chain crosses the membrane as a helical span at residues 402–422 (FNFSILGLGDIALPGMFIAMC). Residue aspartate 411 is part of the active site. The Cytoplasmic portion of the chain corresponds to 423 to 450 (YKYDIWKWHLDHDDTEFHFLNWSYVGKY). A helical transmembrane segment spans residues 451-471 (FITAMVSYVASLVSAMVSLSI). The Lumenal segment spans residues 472–475 (FNTA). The helical transmembrane segment at 476–496 (QPALLYIVPSLLISTILVACW) threads the bilayer. The short motif at 477-479 (PAL) is the PAL element. Residues 497–587 (NKDFKQFWNF…EEDLLDDESS (91 aa)) lie on the Cytoplasmic side of the membrane. The interval 561-587 (EFVQEEDLSDSSEEELSEEDLLDDESS) is disordered.

This sequence belongs to the peptidase A22B family.

It localises to the membrane. The protein localises to the endoplasmic reticulum membrane. In terms of biological role, may act as intramembrane protease. In Saccharomyces cerevisiae (strain ATCC 204508 / S288c) (Baker's yeast), this protein is Probable intramembrane protease YKL100C.